The following is a 198-amino-acid chain: MAEKQTAKRNRREEILQSLALMLESSDGSQRITTAKLAASVGVSEAALYRHFPSKTRMFDSLIEFIEDSLITRINLILKDEKDTTARLRLIVLLILGFGERNPGLTRIMTGHALMFEQDKLQGRINQLFERIEAQLRQVLREKKMREGEGYTTDENVLAGQLLAFCEGMLSRFVRSEFKYRPTDDFDTRWPLVAAQLQ.

Residues Asn10–Leu70 enclose the HTH tetR-type domain. The H-T-H motif DNA-binding region spans Thr33–Phe52. The stretch at Glu117–Met145 forms a coiled coil.

Belongs to the nucleoid occlusion factor SlmA family. In terms of assembly, homodimer. Interacts with FtsZ.

It localises to the cytoplasm. It is found in the nucleoid. Functionally, required for nucleoid occlusion (NO) phenomenon, which prevents Z-ring formation and cell division over the nucleoid. Acts as a DNA-associated cell division inhibitor that binds simultaneously chromosomal DNA and FtsZ, and disrupts the assembly of FtsZ polymers. SlmA-DNA-binding sequences (SBS) are dispersed on non-Ter regions of the chromosome, preventing FtsZ polymerization at these regions. The polypeptide is Nucleoid occlusion factor SlmA (Enterobacter sp. (strain 638)).